We begin with the raw amino-acid sequence, 789 residues long: uncharacterized protein (789 aa).

Disordered regions lie at residues 107–326, 426–491, 523–625, 666–751, and 765–789; these read YQQD…NNNN, MLKS…NNNN, SVNF…ISNN, THTF…KGNN, and PTRF…YNQH. A compositionally biased stretch (acidic residues) spans 113 to 123; sequence NNTDDEQEQEQ. Composition is skewed to low complexity over residues 124–141, 151–194, 201–213, and 225–270; these read EQQQ…TPIK, TSQT…ITPI, SIST…LRSS, and TSST…THNS. The segment covering 274–290 has biased composition (acidic residues); that stretch reads IDDDDGDNNDEINDEND. Composition is skewed to low complexity over residues 291 to 326 and 429 to 491; these read INSN…NNNN and SNNS…NNNN. A compositionally biased stretch (polar residues) spans 523–549; sequence SVNFDRNQNQKSPFLNNTSMPNINFNE. Low complexity-rich tracts occupy residues 550–581, 602–617, 696–722, and 766–789; these read QSQQ…SINY, TSGS…NNSK, HIMN…SGSN, and TRFN…YNQH.

This is an uncharacterized protein from Dictyostelium discoideum (Social amoeba).